The chain runs to 402 residues: Diaminopimelate decarboxylase (402 aa).

K61 is modified (N6-(pyridoxal phosphate)lysine). Residues G233 and 269–272 contribute to the pyridoxal 5'-phosphate site; that span reads EPGR. Residues R272, R304, Y308, E334, and Y360 each contribute to the substrate site. Y360 is a pyridoxal 5'-phosphate binding site.

Belongs to the Orn/Lys/Arg decarboxylase class-II family. LysA subfamily. As to quaternary structure, homodimer. The cofactor is pyridoxal 5'-phosphate.

The catalysed reaction is meso-2,6-diaminopimelate + H(+) = L-lysine + CO2. The protein operates within amino-acid biosynthesis; L-lysine biosynthesis via DAP pathway; L-lysine from DL-2,6-diaminopimelate: step 1/1. In terms of biological role, specifically catalyzes the decarboxylation of meso-diaminopimelate (meso-DAP) to L-lysine. In Thermoplasma acidophilum (strain ATCC 25905 / DSM 1728 / JCM 9062 / NBRC 15155 / AMRC-C165), this protein is Diaminopimelate decarboxylase.